The chain runs to 340 residues: Ketol-acid reductoisomerase (NADP(+)) (340 aa).

The KARI N-terminal Rossmann domain occupies 3–183; sequence LPIYYDKDCD…GGGRTGIIHT (181 aa). NADP(+) contacts are provided by residues 26-29, Ser54, and 84-87; these read FGSQ and DEIQ. Residue His109 is part of the active site. Position 135 (Gly135) interacts with NADP(+). Positions 184–329 constitute a KARI C-terminal knotted domain; the sequence is TFKDETETDL…KRLRAMMPWI (146 aa). Positions 192, 196, 228, and 232 each coordinate Mg(2+). Ser253 serves as a coordination point for substrate.

Belongs to the ketol-acid reductoisomerase family. It depends on Mg(2+) as a cofactor.

The catalysed reaction is (2R)-2,3-dihydroxy-3-methylbutanoate + NADP(+) = (2S)-2-acetolactate + NADPH + H(+). It carries out the reaction (2R,3R)-2,3-dihydroxy-3-methylpentanoate + NADP(+) = (S)-2-ethyl-2-hydroxy-3-oxobutanoate + NADPH + H(+). The protein operates within amino-acid biosynthesis; L-isoleucine biosynthesis; L-isoleucine from 2-oxobutanoate: step 2/4. It participates in amino-acid biosynthesis; L-valine biosynthesis; L-valine from pyruvate: step 2/4. Functionally, involved in the biosynthesis of branched-chain amino acids (BCAA). Catalyzes an alkyl-migration followed by a ketol-acid reduction of (S)-2-acetolactate (S2AL) to yield (R)-2,3-dihydroxy-isovalerate. In the isomerase reaction, S2AL is rearranged via a Mg-dependent methyl migration to produce 3-hydroxy-3-methyl-2-ketobutyrate (HMKB). In the reductase reaction, this 2-ketoacid undergoes a metal-dependent reduction by NADPH to yield (R)-2,3-dihydroxy-isovalerate. The sequence is that of Ketol-acid reductoisomerase (NADP(+)) from Nitratiruptor sp. (strain SB155-2).